Here is a 118-residue protein sequence, read N- to C-terminus: UPF0295 protein BCE_0593 (118 aa).

The next 2 membrane-spanning stretches (helical) occupy residues 12-32 (IRTFALSLVFIGLFIAYLGVF) and 43-63 (FMMVGFLAVIASTVVYFWIGM).

The protein belongs to the UPF0295 family.

It is found in the cell membrane. This Bacillus cereus (strain ATCC 10987 / NRS 248) protein is UPF0295 protein BCE_0593.